The sequence spans 463 residues: Fumarate hydratase class II (463 aa).

Residues 95–97 (SGT), 126–129 (HPND), 136–138 (SSN), and Thr184 contribute to the substrate site. His185 (proton donor/acceptor) is an active-site residue. Ser315 is an active-site residue. Substrate-binding positions include Ser316 and 321–323 (KIN).

This sequence belongs to the class-II fumarase/aspartase family. Fumarase subfamily. Homotetramer.

The protein resides in the cytoplasm. It carries out the reaction (S)-malate = fumarate + H2O. It functions in the pathway carbohydrate metabolism; tricarboxylic acid cycle; (S)-malate from fumarate: step 1/1. Functionally, involved in the TCA cycle. Catalyzes the stereospecific interconversion of fumarate to L-malate. The chain is Fumarate hydratase class II from Chlamydia trachomatis serovar D (strain ATCC VR-885 / DSM 19411 / UW-3/Cx).